A 184-amino-acid chain; its full sequence is Peptidyl-tRNA hydrolase (184 aa).

Tyr-14 contributes to the tRNA binding site. Catalysis depends on His-19, which acts as the Proton acceptor. Phe-64, Asn-66, and Asn-112 together coordinate tRNA.

The protein belongs to the PTH family. Monomer.

Its subcellular location is the cytoplasm. It catalyses the reaction an N-acyl-L-alpha-aminoacyl-tRNA + H2O = an N-acyl-L-amino acid + a tRNA + H(+). In terms of biological role, hydrolyzes ribosome-free peptidyl-tRNAs (with 1 or more amino acids incorporated), which drop off the ribosome during protein synthesis, or as a result of ribosome stalling. Catalyzes the release of premature peptidyl moieties from peptidyl-tRNA molecules trapped in stalled 50S ribosomal subunits, and thus maintains levels of free tRNAs and 50S ribosomes. The polypeptide is Peptidyl-tRNA hydrolase (Thermoanaerobacter sp. (strain X514)).